A 393-amino-acid polypeptide reads, in one-letter code: Staphopain B (393 aa).

Positions 1–36 (MNSSCKTRVFNIISIIMVSMLILSLGAFANNNKAKA) are cleaved as a signal peptide. Positions 37–219 (DSHSKQLEIN…KVEENEAIQE (183 aa)) are excised as a propeptide. Residues Cys243, His340, and Asn360 contribute to the active site.

Belongs to the peptidase C47 family. In terms of assembly, in the cytoplasm, prematurely activated/folded SspB forms a stable non-covalent complex with SspC. Post-translationally, proteolytically cleaved by staphylococcal serine protease (SspA).

Its subcellular location is the secreted. Its activity is regulated as follows. Prematurely activated/folded staphopain B is inhibited by staphostatin B (SspC), which is probably required to protect staphylococcal cytoplasmic proteins from degradation by SspB. Its function is as follows. Cysteine protease that plays an important role in the inhibition of host innate immune response. Degrades host elastin, fibrogen, fibronectin and kininogen. Blocks phagocytosis of opsonised S.aureus by neutrophils and monocytes by inducing their death in a proteolytic activity-dependent manner. Decreases surface expression of the 'don't eat me' signal CD31 on neutrophils. Cleaves host galectin-3/LGALS3, thereby inhibiting the neutrophil-activating ability of the lectin. This chain is Staphopain B (sspB), found in Staphylococcus aureus.